A 139-amino-acid polypeptide reads, in one-letter code: Putative nickel-responsive regulator (139 aa).

4 residues coordinate Ni(2+): histidine 79, histidine 90, histidine 92, and cysteine 98.

The protein belongs to the transcriptional regulatory CopG/NikR family. Ni(2+) serves as cofactor.

Transcriptional regulator. This Anaeromyxobacter sp. (strain K) protein is Putative nickel-responsive regulator.